The following is a 237-amino-acid chain: Aliphatic sulfonates import ATP-binding protein SsuB 1 (237 aa).

The region spanning 5 to 221 (LMNIRVDRKA…PRDRRDPLLA (217 aa)) is the ABC transporter domain. An ATP-binding site is contributed by 38-45 (GPSGCGKS).

This sequence belongs to the ABC transporter superfamily. Aliphatic sulfonates importer (TC 3.A.1.17.2) family. As to quaternary structure, the complex is composed of two ATP-binding proteins (SsuB), two transmembrane proteins (SsuC) and a solute-binding protein (SsuA).

It localises to the cell inner membrane. It catalyses the reaction ATP + H2O + aliphatic sulfonate-[sulfonate-binding protein]Side 1 = ADP + phosphate + aliphatic sulfonateSide 2 + [sulfonate-binding protein]Side 1.. Part of the ABC transporter complex SsuABC involved in aliphatic sulfonates import. Responsible for energy coupling to the transport system. This is Aliphatic sulfonates import ATP-binding protein SsuB 1 from Pseudomonas savastanoi pv. phaseolicola (strain 1448A / Race 6) (Pseudomonas syringae pv. phaseolicola (strain 1448A / Race 6)).